We begin with the raw amino-acid sequence, 419 residues long: UDP-N-acetylglucosamine 1-carboxyvinyltransferase 1 (419 aa).

Residue 22–23 (KN) participates in phosphoenolpyruvate binding. Arg92 is a UDP-N-acetyl-alpha-D-glucosamine binding site. Cys116 functions as the Proton donor in the catalytic mechanism. Residue Cys116 is modified to 2-(S-cysteinyl)pyruvic acid O-phosphothioketal. UDP-N-acetyl-alpha-D-glucosamine contacts are provided by residues 121 to 125 (RPIDL), Asp306, and Ile328.

This sequence belongs to the EPSP synthase family. MurA subfamily.

The protein resides in the cytoplasm. The catalysed reaction is phosphoenolpyruvate + UDP-N-acetyl-alpha-D-glucosamine = UDP-N-acetyl-3-O-(1-carboxyvinyl)-alpha-D-glucosamine + phosphate. It functions in the pathway cell wall biogenesis; peptidoglycan biosynthesis. In terms of biological role, cell wall formation. Adds enolpyruvyl to UDP-N-acetylglucosamine. This chain is UDP-N-acetylglucosamine 1-carboxyvinyltransferase 1, found in Streptococcus agalactiae serotype Ia (strain ATCC 27591 / A909 / CDC SS700).